A 201-amino-acid chain; its full sequence is FMN-dependent NADH:quinone oxidoreductase (201 aa).

FMN-binding positions include S10, 16–18 (SQS), 96–99 (MYNF), and 140–143 (SRGG).

It belongs to the azoreductase type 1 family. In terms of assembly, homodimer. Requires FMN as cofactor.

It catalyses the reaction 2 a quinone + NADH + H(+) = 2 a 1,4-benzosemiquinone + NAD(+). The enzyme catalyses N,N-dimethyl-1,4-phenylenediamine + anthranilate + 2 NAD(+) = 2-(4-dimethylaminophenyl)diazenylbenzoate + 2 NADH + 2 H(+). Its function is as follows. Quinone reductase that provides resistance to thiol-specific stress caused by electrophilic quinones. Functionally, also exhibits azoreductase activity. Catalyzes the reductive cleavage of the azo bond in aromatic azo compounds to the corresponding amines. In Escherichia coli O157:H7, this protein is FMN-dependent NADH:quinone oxidoreductase.